The primary structure comprises 590 residues: Putative laccase-19 (590 aa).

A signal peptide spans 1-28 (MEKLSMVTSLLCAITVAVLAVAVVSGEA). Plastocyanin-like domains are found at residues 36–152 (VVHE…PRDG) and 161–315 (KDVP…YAGA). N-linked (GlcNAc...) asparagine glycosylation is found at asparagine 41 and asparagine 47. Histidine 86 and histidine 88 together coordinate Cu cation. Asparagine 120 carries an N-linked (GlcNAc...) asparagine glycan. 2 residues coordinate Cu cation: histidine 131 and histidine 133. 6 N-linked (GlcNAc...) asparagine glycosylation sites follow: asparagine 205, asparagine 344, asparagine 378, asparagine 397, asparagine 434, and asparagine 465. In terms of domain architecture, Plastocyanin-like 3 spans 424-566 (DFPIRPPRPF…ATAFIVEDGP (143 aa)). Asparagine 483, histidine 486, histidine 488, histidine 545, cysteine 546, histidine 547, histidine 551, and methionine 556 together coordinate Cu cation. Residues 565 to 590 (GPTPETSLPPPPPEFKRCGNNGLSQP) form a disordered region.

It belongs to the multicopper oxidase family. Requires Cu cation as cofactor.

The protein resides in the secreted. It is found in the extracellular space. The protein localises to the apoplast. The enzyme catalyses 4 hydroquinone + O2 = 4 benzosemiquinone + 2 H2O. Functionally, lignin degradation and detoxification of lignin-derived products. In Oryza sativa subsp. indica (Rice), this protein is Putative laccase-19 (LAC19).